The following is a 272-amino-acid chain: Phosphonates import ATP-binding protein PhnC (272 aa).

Residues 2–246 (LELQRLTKTY…VLATIYGAED (245 aa)) form the ABC transporter domain. 35 to 42 (GPSGAGKS) provides a ligand contact to ATP. The tract at residues 248-272 (ASSGREPAPEREPEDTERHLAEVGR) is disordered. Residues 254–272 (PAPEREPEDTERHLAEVGR) are compositionally biased toward basic and acidic residues.

This sequence belongs to the ABC transporter superfamily. Phosphonates importer (TC 3.A.1.9.1) family. As to quaternary structure, the complex is composed of two ATP-binding proteins (PhnC), two transmembrane proteins (PhnE) and a solute-binding protein (PhnD).

It is found in the cell inner membrane. It carries out the reaction phosphonate(out) + ATP + H2O = phosphonate(in) + ADP + phosphate + H(+). Functionally, part of the ABC transporter complex PhnCDE involved in phosphonates import. Responsible for energy coupling to the transport system. The sequence is that of Phosphonates import ATP-binding protein PhnC from Chromohalobacter salexigens (strain ATCC BAA-138 / DSM 3043 / CIP 106854 / NCIMB 13768 / 1H11).